The sequence spans 601 residues: Probable translation initiation factor IF-2 (601 aa).

One can recognise a tr-type G domain in the interval 10-227 (LRAPIVVVLG…VLAGLAQRYL (218 aa)). Residues 19-26 (GHVDAGKT) are G1. 19-26 (GHVDAGKT) lines the GTP pocket. A G2 region spans residues 44-48 (TMTQH). The G3 stretch occupies residues 83 to 86 (DTPG). Residues 83-87 (DTPGH) and 137-140 (NKID) contribute to the GTP site. A G4 region spans residues 137 to 140 (NKID). Residues 205–207 (SAV) form a G5 region.

Belongs to the TRAFAC class translation factor GTPase superfamily. Classic translation factor GTPase family. IF-2 subfamily.

Function in general translation initiation by promoting the binding of the formylmethionine-tRNA to ribosomes. Seems to function along with eIF-2. The sequence is that of Probable translation initiation factor IF-2 from Thermofilum pendens (strain DSM 2475 / Hrk 5).